Reading from the N-terminus, the 55-residue chain is Large ribosomal subunit protein bL33 (55 aa).

The protein belongs to the bacterial ribosomal protein bL33 family.

The polypeptide is Large ribosomal subunit protein bL33 (Mycobacterium leprae (strain Br4923)).